We begin with the raw amino-acid sequence, 234 residues long: Opacity protein opA55 (234 aa).

A signal peptide is located at residue Ala-1.

It belongs to the opacity porin family.

The protein resides in the cell outer membrane. In terms of biological role, implicated in a number of adherence functions. OPA proteins are implicated in pathogenesis and are subject to phase variation. This Neisseria gonorrhoeae protein is Opacity protein opA55 (opaE).